Consider the following 176-residue polypeptide: MIDDDGYRPNVGIVICNRQGQVLWARRYGQHSWQFPQGGINPGESPEQAMYRELFEEVGLSRKDVKILASTRNWLRYKLPKRLVRWDTKPVCIGQKQRWFLLQLTSNDKDINVQQSKTPEFDGWRWVSYWYPVRQVVSFKRDVYRRVMKEFAPVVMPLQEQVSMSRPSYGYRRKRY.

The Nudix hydrolase domain occupies 6-149; it reads GYRPNVGIVI…KRDVYRRVMK (144 aa). The Nudix box motif lies at 38-59; it reads GGINPGESPEQAMYRELFEEVG.

The protein belongs to the Nudix hydrolase family. RppH subfamily. A divalent metal cation is required as a cofactor.

Its function is as follows. Accelerates the degradation of transcripts by removing pyrophosphate from the 5'-end of triphosphorylated RNA, leading to a more labile monophosphorylated state that can stimulate subsequent ribonuclease cleavage. The protein is RNA pyrophosphohydrolase of Proteus mirabilis (strain HI4320).